Reading from the N-terminus, the 419-residue chain is uncharacterized protein (419 aa).

This sequence belongs to the MT-A70-like family.

The protein localises to the cytoplasm. This is an uncharacterized protein from Schizosaccharomyces pombe (strain 972 / ATCC 24843) (Fission yeast).